The sequence spans 50 residues: uncharacterized protein (50 aa).

The segment at 1-50 (MKTGFWQQVLPKRAGRRKEHPVQYMPHKKEENATGLMNPSLHTSHSAILK) is disordered. Residues 35–50 (GLMNPSLHTSHSAILK) are compositionally biased toward polar residues.

This is an uncharacterized protein from Treponema pallidum (strain Nichols).